The chain runs to 102 residues: Defensin-like protein 285 (102 aa).

The N-terminal stretch at 1–28 is a signal peptide; sequence MTNLYFKTAFLLSLLLLSFSYQSKLIEA. Cystine bridges form between Cys39–Cys100, Cys64–Cys83, Cys70–Cys88, and Cys75–Cys90.

This sequence belongs to the DEFL family.

It is found in the secreted. The protein is Defensin-like protein 285 of Arabidopsis thaliana (Mouse-ear cress).